The primary structure comprises 269 residues: MMESIKKLRELTGAGMMDVKKALADAGNDEEKAIALLRERGIVKAAKKADREAKEGLVRFVVDGNRAAMVEVNSETDFVARNSDFQALVEQVAQAALRAGTNNVEELRNFTLDNGETVGNAVAAAAGKIGENLVLNRVAYIDAGEGEHVAGYVHSNGKIGVLVDLLGGTEAQAKDVALHVAAERPQYLNRDEVNAADLEKEREILTNKALNEGKPQQIVDKIVQGQIGKFYEERVLPEQKFVKDNSVTVGQYLGNAQVKRFVRFEVGAQ.

The tract at residues 76 to 79 is involved in Mg(2+) ion dislocation from EF-Tu; that stretch reads TDFV.

This sequence belongs to the EF-Ts family.

It is found in the cytoplasm. Associates with the EF-Tu.GDP complex and induces the exchange of GDP to GTP. It remains bound to the aminoacyl-tRNA.EF-Tu.GTP complex up to the GTP hydrolysis stage on the ribosome. The chain is Elongation factor Ts from Deinococcus geothermalis (strain DSM 11300 / CIP 105573 / AG-3a).